The primary structure comprises 461 residues: Vitamin K-dependent protein C (461 aa).

The N-terminal stretch at 1 to 18 is a signal peptide; it reads MWQLTSLLLFVATWGISG. Thr-19 carries an O-linked (GalNAc...) threonine glycan. Residues 19 to 42 constitute a propeptide that is removed on maturation; sequence TPAPLDSVFSSSERAHQVLRIRKR. In terms of domain architecture, Gla spans 43-88; that stretch reads ANSFLEELRHSSLERECIEEICDFEEAKEIFQNVDDTLAFWSKHVD. 4-carboxyglutamate is present on residues Glu-48, Glu-49, Glu-56, Glu-58, Glu-61, Glu-62, Glu-67, Glu-68, and Glu-71. An intrachain disulfide couples Cys-59 to Cys-64. 4 cysteine pairs are disulfide-bonded: Cys-92–Cys-111, Cys-101–Cys-106, Cys-105–Cys-120, and Cys-122–Cys-131. 2 consecutive EGF-like domains span residues 97-132 and 136-176; these read LEHP…RFCQ and SFLN…LQCH. At Asp-113 the chain carries (3R)-3-hydroxyaspartate. Residue Asn-139 is glycosylated (N-linked (GlcNAc...) asparagine). Intrachain disulfides connect Cys-140-Cys-151, Cys-147-Cys-160, Cys-162-Cys-175, Cys-183-Cys-319, and Cys-238-Cys-254. One can recognise a Peptidase S1 domain in the interval 212-450; it reads LIDGKMTRRG…YLDWIHGHIR (239 aa). The active-site Charge relay system is the His-253. The N-linked (GlcNAc...) asparagine glycan is linked to Asn-290. Asp-299 acts as the Charge relay system in catalysis. The residue at position 347 (Ser-347) is a Phosphoserine; by FAM20C. The N-linked (GlcNAc...) asparagine glycan is linked to Asn-355. Asn-371 carries an N-linked (GlcNAc...) asparagine; atypical; partial glycan. 2 disulfides stabilise this stretch: Cys-373/Cys-387 and Cys-398/Cys-426. Ser-402 acts as the Charge relay system in catalysis.

This sequence belongs to the peptidase S1 family. In terms of assembly, synthesized as a single chain precursor, which is cleaved into a light chain and a heavy chain held together by a disulfide bond. The enzyme is then activated by thrombin, which cleaves a tetradecapeptide from the amino end of the heavy chain; this reaction, which occurs at the surface of endothelial cells, is strongly promoted by thrombomodulin. Interacts (activated) with iripin-8, a serine protease inhibitor from Ixodes ricinus saliva. In terms of processing, the vitamin K-dependent, enzymatic carboxylation of some Glu residues allows the modified protein to bind calcium. Post-translationally, N- and O-glycosylated. Partial (70%) N-glycosylation of Asn-371 with an atypical N-X-C site produces a higher molecular weight form referred to as alpha. The lower molecular weight form, not N-glycosylated at Asn-371, is beta. O-glycosylated with core 1 or possibly core 8 glycans. The iron and 2-oxoglutarate dependent 3-hydroxylation of aspartate and asparagine is (R) stereospecific within EGF domains. In terms of processing, may be phosphorylated on a Ser or Thr in a region (AA 25-30) of the propeptide. In terms of tissue distribution, plasma; synthesized in the liver.

The protein resides in the secreted. The protein localises to the golgi apparatus. Its subcellular location is the endoplasmic reticulum. It catalyses the reaction Degradation of blood coagulation factors Va and VIIIa.. Protein C is a vitamin K-dependent serine protease that regulates blood coagulation by inactivating factors Va and VIIIa in the presence of calcium ions and phospholipids. Exerts a protective effect on the endothelial cell barrier function. This Homo sapiens (Human) protein is Vitamin K-dependent protein C (PROC).